We begin with the raw amino-acid sequence, 77 residues long: Small ribosomal subunit protein bS18 (77 aa).

The protein belongs to the bacterial ribosomal protein bS18 family. Part of the 30S ribosomal subunit. Forms a tight heterodimer with protein bS6.

Functionally, binds as a heterodimer with protein bS6 to the central domain of the 16S rRNA, where it helps stabilize the platform of the 30S subunit. The sequence is that of Small ribosomal subunit protein bS18 from Desulforamulus reducens (strain ATCC BAA-1160 / DSM 100696 / MI-1) (Desulfotomaculum reducens).